Here is a 115-residue protein sequence, read N- to C-terminus: Large ribosomal subunit protein bL19 (115 aa).

This sequence belongs to the bacterial ribosomal protein bL19 family.

In terms of biological role, this protein is located at the 30S-50S ribosomal subunit interface and may play a role in the structure and function of the aminoacyl-tRNA binding site. In Erwinia tasmaniensis (strain DSM 17950 / CFBP 7177 / CIP 109463 / NCPPB 4357 / Et1/99), this protein is Large ribosomal subunit protein bL19.